The sequence spans 379 residues: S-(hydroxymethyl)glutathione dehydrogenase (379 aa).

Cys-47 lines the Zn(2+) pocket. His-48 serves as a coordination point for NAD(+). The Zn(2+) site is built by His-69, Glu-70, Cys-99, Cys-102, Cys-105, Cys-113, and Cys-176. NAD(+) is bound by residues 201 to 206 (GAGCIG), Asp-225, and 296 to 298 (IGV).

Belongs to the zinc-containing alcohol dehydrogenase family. Class-III subfamily. The cofactor is Zn(2+).

The catalysed reaction is a primary alcohol + NAD(+) = an aldehyde + NADH + H(+). It carries out the reaction a secondary alcohol + NAD(+) = a ketone + NADH + H(+). The enzyme catalyses S-(hydroxymethyl)glutathione + NADP(+) = S-formylglutathione + NADPH + H(+). It catalyses the reaction S-(hydroxymethyl)glutathione + NAD(+) = S-formylglutathione + NADH + H(+). The catalysed reaction is S-nitrosoglutathione + NADH + H(+) = S-(hydroxysulfenamide)glutathione + NAD(+). Its function is as follows. Oxidizes long-chain alcohols and, in the presence of glutathione, is able to oxidize formaldehyde. Also acts as a S-nitroso-glutathione reductase by catalyzing the NADH-dependent reduction of S-nitrosoglutathione, thereby regulating protein S-nitrosylation. This is S-(hydroxymethyl)glutathione dehydrogenase (FLD1) from Komagataella pastoris (Yeast).